The following is a 139-amino-acid chain: Large ribosomal subunit protein uL16 (139 aa).

A compositionally biased stretch (basic residues) spans 1–13; it reads MLQPARRKYRKEQ. The disordered stretch occupies residues 1–23; that stretch reads MLQPARRKYRKEQKGRNTGISHS.

The protein belongs to the universal ribosomal protein uL16 family. Part of the 50S ribosomal subunit.

Functionally, binds 23S rRNA and is also seen to make contacts with the A and possibly P site tRNAs. This Herminiimonas arsenicoxydans protein is Large ribosomal subunit protein uL16.